Reading from the N-terminus, the 185-residue chain is Protein GrpE (185 aa).

The disordered stretch occupies residues 1 to 44; it reads MSEEELTNGPGPEPQPEPLEVESAPLEAAPAGEPDKALLEAQQQ.

It belongs to the GrpE family. Homodimer.

The protein localises to the cytoplasm. Functionally, participates actively in the response to hyperosmotic and heat shock by preventing the aggregation of stress-denatured proteins, in association with DnaK and GrpE. It is the nucleotide exchange factor for DnaK and may function as a thermosensor. Unfolded proteins bind initially to DnaJ; upon interaction with the DnaJ-bound protein, DnaK hydrolyzes its bound ATP, resulting in the formation of a stable complex. GrpE releases ADP from DnaK; ATP binding to DnaK triggers the release of the substrate protein, thus completing the reaction cycle. Several rounds of ATP-dependent interactions between DnaJ, DnaK and GrpE are required for fully efficient folding. This chain is Protein GrpE, found in Methylococcus capsulatus (strain ATCC 33009 / NCIMB 11132 / Bath).